Reading from the N-terminus, the 290-residue chain is Dual-specificity RNA pseudouridine synthase RluF (290 aa).

The region spanning 7–72 (VRLNKYISES…EAEDLVLIAL (66 aa)) is the S4 RNA-binding domain. 2 interaction with RNA regions span residues 105 to 108 (RLDK) and 187 to 190 (RQIR). Catalysis depends on aspartate 107, which acts as the Nucleophile. The disordered stretch occupies residues 241–290 (SEAKPKAKAKPKTAGIKRPVVKMEKTAEKGGRPASNGKRFTSPGRKKKGR). Residues 261–271 (VKMEKTAEKGG) are compositionally biased toward basic and acidic residues.

Belongs to the pseudouridine synthase RsuA family. As to quaternary structure, monomer.

It catalyses the reaction uridine(2604) in 23S rRNA = pseudouridine(2604) in 23S rRNA. The enzyme catalyses uridine(35) in tRNA(Tyr) = pseudouridine(35) in tRNA(Tyr). In terms of biological role, dual specificity enzyme that catalyzes the synthesis of pseudouridine from uracil-2604 in 23S ribosomal RNA and from uracil-35 in the anticodon of tRNA(Tyr). The polypeptide is Dual-specificity RNA pseudouridine synthase RluF (rluF) (Escherichia coli O157:H7).